A 246-amino-acid chain; its full sequence is Exosome complex component SKI6 (246 aa).

Belongs to the RNase PH family. In terms of assembly, component of the RNA exosome complex. Specifically part of the catalytically inactive RNA exosome core complex (Exo-9) which may associate with the catalytic subunits RRP6 and DIS3 in cytoplasmic- and nuclear-specific RNA exosome complex forms. Exo-9 is formed by a hexameric base ring of RNase PH domain-containing subunits and a cap ring consisting of CSL4, RRP4 and RRP40.

The protein resides in the cytoplasm. It is found in the nucleus. The protein localises to the nucleolus. In terms of biological role, non-catalytic component of the RNA exosome complex which has 3'-&gt;5' exoribonuclease activity and participates in a multitude of cellular RNA processing and degradation events. In the nucleus, the RNA exosome complex is involved in proper maturation of stable RNA species such as rRNA, snRNA and snoRNA, in the elimination of RNA processing by-products and non-coding 'pervasive' transcripts, such as antisense RNA species and cryptic unstable transcripts (CUTs), and of mRNAs with processing defects, thereby limiting or excluding their export to the cytoplasm. In the cytoplasm, the RNA exosome complex is involved in general mRNA turnover and in RNA surveillance pathways, preventing translation of aberrant mRNAs. The catalytic inactive RNA exosome core complex of 9 subunits (Exo-9) is proposed to play a pivotal role in the binding and presentation of RNA for ribonucleolysis, and to serve as a scaffold for the association with catalytic subunits and accessory proteins or complexes. SKI6 is part of the hexameric ring of RNase PH domain-containing subunits proposed to form a central channel which threads RNA substrates for degradation. This chain is Exosome complex component SKI6 (SKI6), found in Saccharomyces cerevisiae (strain ATCC 204508 / S288c) (Baker's yeast).